The primary structure comprises 510 residues: ATP synthase subunit alpha, mitochondrial (510 aa).

171-178 (GDRQTGKT) serves as a coordination point for ATP.

As to quaternary structure, F-type ATP synthases have 2 components, the catalytic core F(1) and the membrane-embedded component F(0), linked together by a central stalk and a peripheral stalk. The central stalk, also called rotor shaft, is often seen as part of F(1). The peripheral stalk is seen as part of F(0). F(0) contains the membrane channel next to the rotor. F-type ATP synthases form dimers but each monomer functions independently in ATP generation. The dimer consists of 18 different polypeptides: ATP1 (subunit alpha, part of F(1), 3 molecules per monomer), ATP2 (subunit beta, part of F(1), 3 molecules per monomer), ATP3 (subunit gamma, part of the central stalk), ATP4 (subunit b, part of the peripheral stalk), ATP5/OSCP (subunit 5/OSCP, part of the peripheral stalk), ATP6 (subunit a, part of the peripheral stalk), ATP7 (subunit d, part of the peripheral stalk), ATP8 (subunit 8, part of the peripheral stalk), OLI1 (subunit c, part of the rotor, 10 molecules per monomer), ATP14 (subunit h, part of the peripheral stalk), ATP15 (subunit epsilon, part of the central stalk), ATP16 (subunit delta, part of the central stalk), ATP17 (subunit f, part of the peripheral stalk), ATP18 (subunit i/j, part of the peripheral stalk). Dimer-specific subunits are ATP19 (subunit k, at interface between monomers), ATP20 (subunit g, at interface between monomers), TIM11 (subunit e, at interface between monomers). Also contains subunit L.

It localises to the mitochondrion inner membrane. Mitochondrial membrane ATP synthase (F(1)F(0) ATP synthase or Complex V) produces ATP from ADP in the presence of a proton gradient across the membrane which is generated by electron transport complexes of the respiratory chain. F-type ATP synthases consist of two structural domains, F(1) - containing the extramembraneous catalytic core, and F(0) - containing the membrane proton channel, linked together by a central stalk and a peripheral stalk. During catalysis, ATP synthesis in the catalytic domain of F(1) is coupled via a rotary mechanism of the central stalk subunits to proton translocation. Subunits alpha/ATP1 and beta/ATP2 form the catalytic core in F(1). Rotation of the central stalk against the surrounding alpha/ATP1(3)beta/ATP2(3) subunits leads to hydrolysis of ATP in three separate catalytic sites on the beta/ATP2 subunits. Subunit alpha/ATP1 does not bear the catalytic high-affinity ATP-binding sites. The polypeptide is ATP synthase subunit alpha, mitochondrial (Pichia angusta (Yeast)).